The chain runs to 166 residues: 6,7-dimethyl-8-ribityllumazine synthase (166 aa).

5-amino-6-(D-ribitylamino)uracil-binding positions include Trp31, 63 to 65 (SFE), and 85 to 87 (VII). 90-91 (GT) lines the (2S)-2-hydroxy-3-oxobutyl phosphate pocket. The active-site Proton donor is His93. Residue Phe118 participates in 5-amino-6-(D-ribitylamino)uracil binding. Arg132 provides a ligand contact to (2S)-2-hydroxy-3-oxobutyl phosphate.

Belongs to the DMRL synthase family.

It catalyses the reaction (2S)-2-hydroxy-3-oxobutyl phosphate + 5-amino-6-(D-ribitylamino)uracil = 6,7-dimethyl-8-(1-D-ribityl)lumazine + phosphate + 2 H2O + H(+). It participates in cofactor biosynthesis; riboflavin biosynthesis; riboflavin from 2-hydroxy-3-oxobutyl phosphate and 5-amino-6-(D-ribitylamino)uracil: step 1/2. Catalyzes the formation of 6,7-dimethyl-8-ribityllumazine by condensation of 5-amino-6-(D-ribitylamino)uracil with 3,4-dihydroxy-2-butanone 4-phosphate. This is the penultimate step in the biosynthesis of riboflavin. The chain is 6,7-dimethyl-8-ribityllumazine synthase from Cutibacterium acnes (strain DSM 16379 / KPA171202) (Propionibacterium acnes).